We begin with the raw amino-acid sequence, 708 residues long: uncharacterized protein (708 aa).

Disordered stretches follow at residues 1–79, 119–301, 349–390, and 410–461; these read MHAR…RRSS, AGEF…IHQR, YLSH…GDEN, and SNSF…KRQR. Residues 65 to 74 show a composition bias toward pro residues; that stretch reads LPPPLPPPPV. A compositionally biased stretch (polar residues) spans 238–249; the sequence is DEAQSKTGSSSA. A compositionally biased stretch (low complexity) spans 260–274; sequence SKVSEGSSSLSAGSG. A compositionally biased stretch (polar residues) spans 410-419; the sequence is SNSFPSSILR. Residues 442–461 show a composition bias toward basic and acidic residues; sequence VGEKRPGEGSDLEEGSKRQR.

This is an uncharacterized protein from Arabidopsis thaliana (Mouse-ear cress).